The primary structure comprises 282 residues: 1D-myo-inositol 2-acetamido-2-deoxy-alpha-D-glucopyranoside deacetylase (282 aa).

Residues His-6, Asp-9, and His-141 each coordinate Zn(2+).

This sequence belongs to the MshB deacetylase family. Requires Zn(2+) as cofactor.

It catalyses the reaction 1D-myo-inositol 2-acetamido-2-deoxy-alpha-D-glucopyranoside + H2O = 1D-myo-inositol 2-amino-2-deoxy-alpha-D-glucopyranoside + acetate. In terms of biological role, catalyzes the deacetylation of 1D-myo-inositol 2-acetamido-2-deoxy-alpha-D-glucopyranoside (GlcNAc-Ins) in the mycothiol biosynthesis pathway. This chain is 1D-myo-inositol 2-acetamido-2-deoxy-alpha-D-glucopyranoside deacetylase, found in Nocardiopsis dassonvillei (strain ATCC 23218 / DSM 43111 / CIP 107115 / JCM 7437 / KCTC 9190 / NBRC 14626 / NCTC 10488 / NRRL B-5397 / IMRU 509) (Actinomadura dassonvillei).